Here is a 143-residue protein sequence, read N- to C-terminus: Regulator of ribonuclease activity B (143 aa).

The segment covering 117–135 (DPDAEYDDEDGENEDDESE) has biased composition (acidic residues). The segment at 117–143 (DPDAEYDDEDGENEDDESESDKSSRLH) is disordered.

This sequence belongs to the RraB family. As to quaternary structure, interacts with the C-terminal region of Rne.

It is found in the cytoplasm. In terms of biological role, globally modulates RNA abundance by binding to RNase E (Rne) and regulating its endonucleolytic activity. Can modulate Rne action in a substrate-dependent manner by altering the composition of the degradosome. In Proteus mirabilis (strain HI4320), this protein is Regulator of ribonuclease activity B.